Reading from the N-terminus, the 24-residue chain is Metallothionein (24 aa).

Cd(2+)-binding residues include Cys-3, Cys-5, Cys-8, Cys-10, Cys-17, Cys-19, and Cys-22.

The protein belongs to the metallothionein superfamily. Type 8 family. In terms of processing, contains 4 disulfide bonds.

In terms of biological role, metallothioneins have a high content of cysteine residues that bind various heavy metals. In Neonectria lugdunensis (Aquatic fungus), this protein is Metallothionein.